Here is a 1307-residue protein sequence, read N- to C-terminus: Histone-lysine N-methyltransferase SETDB1 (1307 aa).

Residues Val-30 to Glu-65 adopt a coiled-coil conformation. Phosphoserine is present on residues Ser-112 and Ser-117. Thr-120 is subject to Phosphothreonine. The segment at Asp-127–Gln-148 is disordered. Lys-182 is covalently cross-linked (Glycyl lysine isopeptide (Lys-Gly) (interchain with G-Cter in SUMO2); alternate). A Glycyl lysine isopeptide (Lys-Gly) (interchain with G-Cter in ubiquitin); alternate cross-link involves residue Lys-182. 2 Tudor domains span residues Lys-257–Thr-320 and Leu-347–Thr-403. Disordered regions lie at residues Ser-404–Gly-424, Ile-444–Glu-512, and Ser-531–Gly-570. The span at Pro-454–Ser-467 shows a compositional bias: pro residues. The span at Glu-476–Arg-494 shows a compositional bias: polar residues. Residues Pro-495–Glu-512 are compositionally biased toward low complexity. Residues Ala-539–Pro-565 are compositionally biased toward pro residues. Residues Tyr-611–Leu-682 enclose the MBD domain. The Pre-SET domain maps to Val-744–Gly-817. Zn(2+) is bound by residues Cys-746, Cys-748, Cys-752, Cys-758, Cys-760, Cys-798, Cys-802, Cys-804, and Cys-809. Residues Val-820 to Asn-1282 enclose the SET domain. S-adenosyl-L-methionine contacts are provided by residues Lys-830–Trp-832, Asp-868, and Tyr-870. A Glycyl lysine isopeptide (Lys-Gly) (interchain with G-Cter in ubiquitin) cross-link involves residue Lys-884. The interval Glu-885–Gln-1174 is disordered. Residues Glu-913–Asp-924 show a composition bias toward acidic residues. The segment covering Gly-950 to Pro-966 has biased composition (basic and acidic residues). Phosphoserine is present on Ser-1042. The segment covering Phe-1048–Asn-1066 has biased composition (basic and acidic residues). Lys-1049 is covalently cross-linked (Glycyl lysine isopeptide (Lys-Gly) (interchain with G-Cter in SUMO2); alternate). Residue Lys-1049 forms a Glycyl lysine isopeptide (Lys-Gly) (interchain with G-Cter in SUMO1); alternate linkage. Glycyl lysine isopeptide (Lys-Gly) (interchain with G-Cter in SUMO2) cross-links involve residues Lys-1055 and Lys-1085. A compositionally biased stretch (polar residues) spans Ser-1097 to Pro-1112. The segment covering Leu-1116 to Ser-1131 has biased composition (low complexity). Residues Gly-1137–Ser-1156 show a composition bias toward polar residues. Lys-1165 participates in a covalent cross-link: Glycyl lysine isopeptide (Lys-Gly) (interchain with G-Cter in SUMO2). 2 positions are modified to N6,N6,N6-trimethyllysine; alternate: Lys-1186 and Lys-1194. N6,N6-dimethyllysine; alternate occurs at positions 1186 and 1194. S-adenosyl-L-methionine-binding positions include Arg-1236 and Asn-1239–His-1240. 4 residues coordinate Zn(2+): Cys-1242, Cys-1295, Cys-1297, and Cys-1302. A Post-SET domain is found at Lys-1291–Leu-1307.

Belongs to the class V-like SAM-binding methyltransferase superfamily. Histone-lysine methyltransferase family. Suvar3-9 subfamily. In terms of assembly, part of a complex containing at least CDYL, REST, WIZ, SETDB1, EHMT1 and EHMT2. Forms a complex with ATRX, TRIM28 and ZNF274. Probably part of a corepressor complex containing ZNF304, TRIM28, SETDB1 and DNMT1. Interacts with TRIM28/TIF1B. Interacts with ATF7IP and ATF7IP2; the interaction with ATF7IP is required to stimulate histone methyltransferase activity and facilitate the conversion of dimethylated to trimethylated H3 'Lys-9'. Interacts with MBD1; interaction is abolished when MBD1 is sumoylated. Interacts with CBX1 and CBX5. Interacts with DNMT3A and DNMT3B. Interacts with SUMO2. Interacts with MPHOSPH8. Interacts with ERG. Interacts with HDAC1, HDAC2, SIN3A, SIN3B. Interacts with ATRX. Interacts with RESF1. Interacts with ZNF638. Interacts with TASOR. Interacts with ZNF263; recruited to the SIX3 promoter along with other proteins involved in chromatin modification and transcriptional corepression where it contributes to transcriptional repression. Interacts with PHF13; the interaction probably enhances SETDB1 chromatin-associated levels and activity. Interacts with VRK1. Post-translationally, degraded by the proteasome, shielded by interaction with ATF7IP. Monoubiquitinated at Lys-884 by E2 enzymes UBE2E family. The conjugated-Ub is protected from deubiquitination through the SET domain. Monoubiquitination at Lys-884 is required for catalytic activity and H3K9 methylation and endogenous retrovirus silencing. Ubiquitously expressed. Strong expression in liver and testis. Expressed in the brain, lungs, kidneys, uterus and seminal vesicles.

It is found in the nucleus. The protein resides in the chromosome. It catalyses the reaction N(6),N(6)-dimethyl-L-lysyl(9)-[histone H3] + S-adenosyl-L-methionine = N(6),N(6),N(6)-trimethyl-L-lysyl(9)-[histone H3] + S-adenosyl-L-homocysteine + H(+). Its function is as follows. Histone methyltransferase that specifically trimethylates 'Lys-9' of histone H3. H3 'Lys-9' trimethylation represents a specific tag for epigenetic transcriptional repression by recruiting HP1 (CBX1, CBX3 and/or CBX5) proteins to methylated histones. Mainly functions in euchromatin regions, thereby playing a central role in the silencing of euchromatic genes. H3 'Lys-9' trimethylation is coordinated with DNA methylation. Probably forms a complex with MBD1 and ATF7IP that represses transcription and couples DNA methylation and histone 'Lys-9' trimethylation. Its activity is dependent on MBD1 and is heritably maintained through DNA replication by being recruited by CAF-1. SETDB1 is targeted to histone H3 by TRIM28/TIF1B, a factor recruited by KRAB zinc-finger proteins. Probably forms a corepressor complex required for activated KRAS-mediated promoter hypermethylation and transcriptional silencing of tumor suppressor genes (TSGs) or other tumor-related genes in colorectal cancer (CRC) cells. Required to maintain a transcriptionally repressive state of genes in undifferentiated embryonic stem cells (ESCs). In ESCs, in collaboration with TRIM28, is also required for H3K9me3 and silencing of endogenous and introduced retroviruses in a DNA-methylation independent-pathway. Associates at promoter regions of tumor suppressor genes (TSGs) leading to their gene silencing. The SETDB1-TRIM28-ZNF274 complex may play a role in recruiting ATRX to the 3'-exons of zinc-finger coding genes with atypical chromatin signatures to establish or maintain/protect H3K9me3 at these transcriptionally active regions. The chain is Histone-lysine N-methyltransferase SETDB1 from Mus musculus (Mouse).